The following is a 297-amino-acid chain: MSQPPAKRQKRAEYRKQAAEAVVAQPDESAPVAHVKLPKKKFYRQRAHANPFSDHQLNYPLSPAHMDWASHFPAFVNPDATQTNLIGTRKLLKDVEVVDIGCGFGGLLVGLAGLLPETLMVGMEIRIAVLEYLNTRIQALRVQQQQQQQKTQSHAALVPGGYQNISAIRSNTMKFFPNFFNKHQLSKIFICFPDPHFKARKHKARIISETLNAEYAYALRPGGLLYTITDVEEYHHWILRHFRDESALFERVSEEELEKDECVKVMKEATEEGKKVTRNKGNKYVAVFRRKEDPEWA.

Residues glycine 101, glutamate 124 to isoleucine 125, asparagine 171 to threonine 172, and cysteine 191 contribute to the S-adenosyl-L-methionine site. Aspartate 194 is a catalytic residue. Threonine 270–glutamate 272 lines the S-adenosyl-L-methionine pocket.

This sequence belongs to the class I-like SAM-binding methyltransferase superfamily. TrmB family. As to quaternary structure, forms a complex with trm82.

It is found in the nucleus. The enzyme catalyses guanosine(46) in tRNA + S-adenosyl-L-methionine = N(7)-methylguanosine(46) in tRNA + S-adenosyl-L-homocysteine. Its pathway is tRNA modification; N(7)-methylguanine-tRNA biosynthesis. In terms of biological role, catalyzes the formation of N(7)-methylguanine at position 46 (m7G46) in tRNA. In Aspergillus niger (strain ATCC MYA-4892 / CBS 513.88 / FGSC A1513), this protein is tRNA (guanine-N(7)-)-methyltransferase (trm8).